We begin with the raw amino-acid sequence, 248 residues long: NADP-dependent 3-hydroxy acid dehydrogenase YdfG (248 aa).

NADP(+) contacts are provided by residues 7–12 (GATAGF), 32–33 (RR), 54–55 (DV), and Asn-81. Ser-134 contributes to the substrate binding site. NADP(+) contacts are provided by residues Tyr-147, Lys-151, and 177-185 (PGLVGGTEF). The Proton acceptor role is filled by Tyr-147.

It belongs to the short-chain dehydrogenases/reductases (SDR) family. In terms of assembly, homotetramer.

The enzyme catalyses 3-hydroxypropanoate + NADP(+) = 3-oxopropanoate + NADPH + H(+). It carries out the reaction L-allo-threonine + NADP(+) = aminoacetone + CO2 + NADPH. Its function is as follows. NADP-dependent dehydrogenase with broad substrate specificity acting on 3-hydroxy acids. Catalyzes the NADP-dependent oxidation of L-allo-threonine to L-2-amino-3-keto-butyrate, which is spontaneously decarboxylated into aminoacetone. Also acts on D-threonine, L-serine, D-serine, D-3-hydroxyisobutyrate, L-3-hydroxyisobutyrate, D-glycerate and L-glycerate. Able to catalyze the reduction of the malonic semialdehyde to 3-hydroxypropionic acid. YdfG is apparently supplementing RutE, the presumed malonic semialdehyde reductase involved in pyrimidine degradation since both are able to detoxify malonic semialdehyde. The protein is NADP-dependent 3-hydroxy acid dehydrogenase YdfG of Escherichia coli O157:H7.